Here is a 179-residue protein sequence, read N- to C-terminus: Bifunctional protein PyrR (179 aa).

The short motif at Ile-97 to Thr-109 is the PRPP-binding element.

It belongs to the purine/pyrimidine phosphoribosyltransferase family. PyrR subfamily.

The catalysed reaction is UMP + diphosphate = 5-phospho-alpha-D-ribose 1-diphosphate + uracil. Functionally, regulates the transcription of the pyrimidine nucleotide (pyr) operon in response to exogenous pyrimidines. Also displays a weak uracil phosphoribosyltransferase activity which is not physiologically significant. The polypeptide is Bifunctional protein PyrR (Elusimicrobium minutum (strain Pei191)).